Here is a 359-residue protein sequence, read N- to C-terminus: Serum paraoxonase/arylesterase 1 (359 aa).

Cysteines 42 and 353 form a disulfide. Asn50 is a glycosylation site (N-linked (GlcNAc...) asparagine). The Ca(2+) site is built by Glu53 and Asp54. The active-site Proton acceptor is the His115. The Ca(2+) site is built by Ile117, Asn168, Asp169, and Asn224. Residue Asn253 is glycosylated (N-linked (GlcNAc...) asparagine). Asp269 and Asn270 together coordinate Ca(2+). N-linked (GlcNAc...) asparagine glycosylation is found at Asn270 and Asn324.

It belongs to the paraoxonase family. In terms of assembly, homodimer. Interacts with CLU. Ca(2+) is required as a cofactor. Glycosylated. Post-translationally, the signal sequence is not cleaved. In terms of tissue distribution, plasma. Associated with HDL.

The protein localises to the secreted. The protein resides in the extracellular space. It catalyses the reaction a phenyl acetate + H2O = a phenol + acetate + H(+). The catalysed reaction is An aryl dialkyl phosphate + H2O = dialkyl phosphate + an aryl alcohol.. The enzyme catalyses an N-acyl-L-homoserine lactone + H2O = an N-acyl-L-homoserine + H(+). In terms of biological role, hydrolyzes the toxic metabolites of a variety of organophosphorus insecticides. Capable of hydrolyzing a broad spectrum of organophosphate substrates and lactones, and a number of aromatic carboxylic acid esters. Mediates an enzymatic protection of low density lipoproteins against oxidative modification. The protein is Serum paraoxonase/arylesterase 1 (PON1) of Oryctolagus cuniculus (Rabbit).